The following is a 443-amino-acid chain: RILP-like protein homolog (443 aa).

In terms of domain architecture, RH1 spans 8–96 (EMGEMVLDAI…ESEKLEKAEF (89 aa)). Residues 59–315 (LELLEALATK…TLNEQLAELK (257 aa)) are a coiled coil. Residues 282 to 401 (RPRYTTRELK…KSSESGIRKF (120 aa)) form the RH2 domain. Positions 311-394 (LAELKPPSQA…PDDAPWKKSS (84 aa)) are disordered. Positions 332–355 (DDSDEDDDGHVADNDDDDDEEEAA) are enriched in acidic residues. Over residues 356–368 (AEANELEPPAAGE) the composition is skewed to low complexity.

Belongs to the RILPL family. In terms of assembly, interacts with Arl8 (in GTP-bound form).

It localises to the lysosome membrane. Functionally, may have a role in lysosome distribution by interacting with Arl8. The sequence is that of RILP-like protein homolog from Drosophila melanogaster (Fruit fly).